Reading from the N-terminus, the 132-residue chain is Fluoride-specific ion channel FluC 3 (132 aa).

The next 4 helical transmembrane spans lie at 4–24 (ILLV…FGGW), 32–52 (FPVG…LIMY), 66–86 (IFLT…GYES), and 95–115 (LMLM…AVYL). 2 residues coordinate Na(+): glycine 74 and threonine 77.

This sequence belongs to the fluoride channel Fluc/FEX (TC 1.A.43) family.

It is found in the cell membrane. The catalysed reaction is fluoride(in) = fluoride(out). With respect to regulation, na(+) is not transported, but it plays an essential structural role and its presence is essential for fluoride channel function. Functionally, fluoride-specific ion channel. Important for reducing fluoride concentration in the cell, thus reducing its toxicity. This Methanosarcina barkeri (strain Fusaro / DSM 804) protein is Fluoride-specific ion channel FluC 3.